We begin with the raw amino-acid sequence, 344 residues long: Golgi-associated RAB2 interactor protein 1B (344 aa).

Belongs to the GARIN family.

It is found in the golgi apparatus. RAB2B effector protein required for accurate acrosome formation and normal male fertility. In complex with RAB2A/RAB2B, seems to suppress excessive vesicle trafficking during acrosome formation. This is Golgi-associated RAB2 interactor protein 1B (Garin1b) from Rattus norvegicus (Rat).